A 217-amino-acid polypeptide reads, in one-letter code: Ribonuclease HII (217 aa).

Residues 17 to 207 (KVIYGVDEAG…CVGQSVSGAR (191 aa)) form the RNase H type-2 domain. A divalent metal cation contacts are provided by Asp23, Glu24, and Asp116.

Belongs to the RNase HII family. Mn(2+) is required as a cofactor. The cofactor is Mg(2+).

The protein localises to the cytoplasm. It carries out the reaction Endonucleolytic cleavage to 5'-phosphomonoester.. Its function is as follows. Endonuclease that specifically degrades the RNA of RNA-DNA hybrids. The sequence is that of Ribonuclease HII from Nitrosomonas europaea (strain ATCC 19718 / CIP 103999 / KCTC 2705 / NBRC 14298).